We begin with the raw amino-acid sequence, 114 residues long: Ribonuclease P protein component (114 aa).

Belongs to the RnpA family. In terms of assembly, consists of a catalytic RNA component (M1 or rnpB) and a protein subunit.

It catalyses the reaction Endonucleolytic cleavage of RNA, removing 5'-extranucleotides from tRNA precursor.. Its function is as follows. RNaseP catalyzes the removal of the 5'-leader sequence from pre-tRNA to produce the mature 5'-terminus. It can also cleave other RNA substrates such as 4.5S RNA. The protein component plays an auxiliary but essential role in vivo by binding to the 5'-leader sequence and broadening the substrate specificity of the ribozyme. This is Ribonuclease P protein component from Staphylococcus haemolyticus (strain JCSC1435).